The primary structure comprises 180 residues: Large ribosomal subunit protein uL5 (180 aa).

Belongs to the universal ribosomal protein uL5 family. Part of the 50S ribosomal subunit; part of the 5S rRNA/L5/L18/L25 subcomplex. Contacts the 5S rRNA and the P site tRNA. Forms a bridge to the 30S subunit in the 70S ribosome.

Functionally, this is one of the proteins that bind and probably mediate the attachment of the 5S RNA into the large ribosomal subunit, where it forms part of the central protuberance. In the 70S ribosome it contacts protein S13 of the 30S subunit (bridge B1b), connecting the 2 subunits; this bridge is implicated in subunit movement. Contacts the P site tRNA; the 5S rRNA and some of its associated proteins might help stabilize positioning of ribosome-bound tRNAs. This is Large ribosomal subunit protein uL5 from Lactobacillus johnsonii (strain CNCM I-12250 / La1 / NCC 533).